Here is a 245-residue protein sequence, read N- to C-terminus: rRNA adenine N-6-methyltransferase (245 aa).

Residues Asn10, Leu12, Gly37, Glu58, Asp83, and Ser100 each contribute to the S-adenosyl-L-methionine site.

It belongs to the class I-like SAM-binding methyltransferase superfamily. rRNA adenine N(6)-methyltransferase family.

The catalysed reaction is adenosine(2085) in 23S rRNA + 2 S-adenosyl-L-methionine = N(6)-dimethyladenosine(2085) in 23S rRNA + 2 S-adenosyl-L-homocysteine + 2 H(+). In terms of biological role, this protein produces a dimethylation of the adenine residue at position 2085 in 23S rRNA, resulting in reduced affinity between ribosomes and macrolide-lincosamide-streptogramin B antibiotics. This is rRNA adenine N-6-methyltransferase from Streptococcus sanguinis.